The sequence spans 118 residues: NADH-quinone oxidoreductase subunit A 2 (118 aa).

Helical transmembrane passes span 5–25, 62–82, and 87–107; these read YLPILVLVVIAVLFGLGSVIF, LIAMLFILFDIEAVFLYPWAV, and LGMFGLIEMGVFIVILFVGYV.

This sequence belongs to the complex I subunit 3 family. In terms of assembly, NDH-1 is composed of 14 different subunits. Subunits NuoA, H, J, K, L, M, N constitute the membrane sector of the complex.

It localises to the cell inner membrane. The enzyme catalyses a quinone + NADH + 5 H(+)(in) = a quinol + NAD(+) + 4 H(+)(out). Its function is as follows. NDH-1 shuttles electrons from NADH, via FMN and iron-sulfur (Fe-S) centers, to quinones in the respiratory chain. The immediate electron acceptor for the enzyme in this species is believed to be ubiquinone. Couples the redox reaction to proton translocation (for every two electrons transferred, four hydrogen ions are translocated across the cytoplasmic membrane), and thus conserves the redox energy in a proton gradient. The chain is NADH-quinone oxidoreductase subunit A 2 from Citrifermentans bemidjiense (strain ATCC BAA-1014 / DSM 16622 / JCM 12645 / Bem) (Geobacter bemidjiensis).